The chain runs to 111 residues: Secreted transmembrane peptide 5 (111 aa).

The N-terminal stretch at 1–46 is a signal peptide; that stretch reads MRLSVFYIFITRLAMTKNATKNEMGSKSPNIVALVLPLLLILYTLS. The short motif at 66-79 is the SCOOP motif element; sequence IVWTPHSNSCGGSP. The SxS motif essential for MIK2 binding motif lies at 72-74; that stretch reads SNS. The interval 89-111 is disordered; that stretch reads TTGRPCRRSRPPGTNIPVSDQSP.

This sequence belongs to the serine rich endogenous peptide (SCOOP) phytocytokine family. Interacts with MIK2 (via extracellular leucine-rich repeat domain); this interaction triggers the formation of complex between MIK2 and the BAK1/SERK3 and SERK4 coreceptors, and subsequent BAK1 activation by phosphorylation. Mostly expressed in leaves, and, to a lower extent, in roots, stems, siliques, seeds and flowers.

The protein resides in the cell membrane. It is found in the secreted. It localises to the extracellular space. The protein localises to the apoplast. Functionally, brassicaceae-specific phytocytokine (plant endogenous peptide released into the apoplast) perceived by MIK2 in a BAK1/SERK3 and SERK4 coreceptors-dependent manner, that modulates various physiological and antimicrobial processes including growth prevention and reactive oxygen species (ROS) response regulation. The sequence is that of Secreted transmembrane peptide 5 from Arabidopsis thaliana (Mouse-ear cress).